We begin with the raw amino-acid sequence, 291 residues long: Phosphatidylglycerol--prolipoprotein diacylglyceryl transferase (291 aa).

4 consecutive transmembrane segments (helical) span residues 24 to 44 (WYAL…RALL), 64 to 84 (FILW…VLFY), 99 to 119 (IWKG…AVIL), and 125 to 145 (GLPI…GLFL). Arginine 147 contacts a 1,2-diacyl-sn-glycero-3-phospho-(1'-sn-glycerol). 3 consecutive transmembrane segments (helical) span residues 187–207 (ATLE…AGAL), 211–231 (GLVL…GEFF), and 247–267 (MGML…CVAW).

Belongs to the Lgt family.

The protein resides in the cell inner membrane. The enzyme catalyses L-cysteinyl-[prolipoprotein] + a 1,2-diacyl-sn-glycero-3-phospho-(1'-sn-glycerol) = an S-1,2-diacyl-sn-glyceryl-L-cysteinyl-[prolipoprotein] + sn-glycerol 1-phosphate + H(+). Its pathway is protein modification; lipoprotein biosynthesis (diacylglyceryl transfer). In terms of biological role, catalyzes the transfer of the diacylglyceryl group from phosphatidylglycerol to the sulfhydryl group of the N-terminal cysteine of a prolipoprotein, the first step in the formation of mature lipoproteins. In Nitrobacter hamburgensis (strain DSM 10229 / NCIMB 13809 / X14), this protein is Phosphatidylglycerol--prolipoprotein diacylglyceryl transferase.